Consider the following 300-residue polypeptide: UDP-N-acetylenolpyruvoylglucosamine reductase (300 aa).

The FAD-binding PCMH-type domain maps to 27–216 (RVGGPADVIF…TERREKTQPI (190 aa)). The active site involves Arg-172. The active-site Proton donor is Ser-223. Residue Glu-293 is part of the active site.

The protein belongs to the MurB family. It depends on FAD as a cofactor.

It localises to the cytoplasm. It catalyses the reaction UDP-N-acetyl-alpha-D-muramate + NADP(+) = UDP-N-acetyl-3-O-(1-carboxyvinyl)-alpha-D-glucosamine + NADPH + H(+). It participates in cell wall biogenesis; peptidoglycan biosynthesis. Functionally, cell wall formation. The sequence is that of UDP-N-acetylenolpyruvoylglucosamine reductase from Phenylobacterium zucineum (strain HLK1).